Here is an 84-residue protein sequence, read N- to C-terminus: uncharacterized protein (84 aa).

This is an uncharacterized protein from Bos taurus (Bovine).